Here is a 576-residue protein sequence, read N- to C-terminus: Deformed epidermal autoregulatory factor 1 (576 aa).

Disordered regions lie at residues 52–76, 189–215, and 309–362; these read VTSS…GGGN, AGGA…NPST, and ESAS…SGSG. Composition is skewed to gly residues over residues 61–76 and 191–207; these read GSGG…GGGN and GASG…GGSS. The SAND domain occupies 210-291; that stretch reads SENPSTQHNE…QSLIDEGTLT (82 aa). The Nuclear localization signal motif lies at 324–340; the sequence is RKRNQTDLDMESGPKRK. Over residues 345 to 362 the composition is skewed to low complexity; that stretch reads HSNNNNSNTNNNNTSGSG. Zn(2+) contacts are provided by Cys-521, Cys-524, Cys-532, Cys-535, Cys-541, Cys-545, His-553, and Cys-557. An MYND-type zinc finger spans residues 521–557; the sequence is CANCNREALAECSLCRKTPYCSEFCQRKDWNAHQVEC.

Its subcellular location is the nucleus. In terms of biological role, transcription factor that binds the homeotic Deformed (Dfd) response element. High affinity binding sites contain at least 1 TTCG motif surrounded by additional TCG sequences. May be involved in the selective action of Dfd on these sites without binding directly to the Dfd protein. Requirement of DEAF1 activity may be a common feature of enhancers targeted by Dfd. This is Deformed epidermal autoregulatory factor 1 (Deaf1) from Drosophila melanogaster (Fruit fly).